The following is a 318-amino-acid chain: L-lactate dehydrogenase 1 (318 aa).

NAD(+) contacts are provided by residues valine 17, aspartate 38, lysine 43, tyrosine 69, and 83–84 (GA). Substrate is bound by residues glutamine 86, arginine 92, and 124–127 (NPVD). Residues 122–124 (ATN) and serine 147 each bind NAD(+). 152-155 (DTGR) provides a ligand contact to substrate. Residues arginine 157 and histidine 172 each coordinate beta-D-fructose 1,6-bisphosphate. Histidine 179 serves as the catalytic Proton acceptor. Tyrosine 224 is modified (phosphotyrosine). Threonine 233 contributes to the substrate binding site.

This sequence belongs to the LDH/MDH superfamily. LDH family. Homotetramer.

The protein localises to the cytoplasm. The catalysed reaction is (S)-lactate + NAD(+) = pyruvate + NADH + H(+). Its pathway is fermentation; pyruvate fermentation to lactate; (S)-lactate from pyruvate: step 1/1. Allosterically activated by fructose 1,6-bisphosphate (FBP). In terms of biological role, catalyzes the conversion of lactate to pyruvate. The sequence is that of L-lactate dehydrogenase 1 from Peribacillus psychrosaccharolyticus (Bacillus psychrosaccharolyticus).